A 263-amino-acid polypeptide reads, in one-letter code: Chymotrypsinogen 2 (263 aa).

The N-terminal stretch at 1 to 18 is a signal peptide; it reads MAFLWLLSCFALLGTAFG. Cystine bridges form between Cys-19-Cys-140, Cys-60-Cys-76, Cys-154-Cys-219, Cys-186-Cys-200, and Cys-209-Cys-238. The 228-residue stretch at 34–261 folds into the Peptidase S1 domain; that stretch reads IVNGEDAVPG…LIPWVQQILQ (228 aa). Residue His-75 is the Charge relay system of the active site. Ser-93 is subject to Phosphoserine. Asp-120 acts as the Charge relay system in catalysis. Residue Ser-213 is the Charge relay system of the active site.

Belongs to the peptidase S1 family.

It localises to the secreted. It is found in the extracellular space. The catalysed reaction is Preferential cleavage: Tyr-|-Xaa, Trp-|-Xaa, Phe-|-Xaa, Leu-|-Xaa.. This Canis lupus familiaris (Dog) protein is Chymotrypsinogen 2 (CTRB1).